The primary structure comprises 570 residues: Small ribosomal subunit protein bS1 (570 aa).

S1 motif domains follow at residues 52 to 116 (GAIL…LSRE), 134 to 199 (GSIV…VSRR), 220 to 288 (GERR…LGLK), 305 to 375 (GKRV…LGLK), 392 to 462 (GLRV…LGVK), and 479 to 548 (GSDI…LSIK).

The protein belongs to the bacterial ribosomal protein bS1 family.

Functionally, binds mRNA; thus facilitating recognition of the initiation point. It is needed to translate mRNA with a short Shine-Dalgarno (SD) purine-rich sequence. In Chlamydia muridarum (strain MoPn / Nigg), this protein is Small ribosomal subunit protein bS1 (rpsA).